Reading from the N-terminus, the 259-residue chain is tRNA (guanine-N(7)-)-methyltransferase (259 aa).

S-adenosyl-L-methionine is bound by residues Gly80, 103–104 (EL), 136–137 (NS), and Leu156. The active site involves Asp159. Position 234-236 (234-236 (TEE)) interacts with S-adenosyl-L-methionine.

It belongs to the class I-like SAM-binding methyltransferase superfamily. TrmB family.

It is found in the nucleus. It catalyses the reaction guanosine(46) in tRNA + S-adenosyl-L-methionine = N(7)-methylguanosine(46) in tRNA + S-adenosyl-L-homocysteine. Its pathway is tRNA modification; N(7)-methylguanine-tRNA biosynthesis. Its function is as follows. Catalyzes the formation of N(7)-methylguanine at position 46 (m7G46) in tRNA. In Oryza sativa subsp. indica (Rice), this protein is tRNA (guanine-N(7)-)-methyltransferase.